A 481-amino-acid polypeptide reads, in one-letter code: GTPase Der (481 aa).

EngA-type G domains are found at residues Pro-47–Ser-210 and Arg-221–Glu-394. GTP is bound by residues Gly-53 to Ser-60, Asp-100 to Trp-104, Asn-162 to Asp-165, Gly-227 to Ser-234, Asp-274 to Ile-278, and Asn-339 to Asp-342. Positions Thr-395–Glu-477 constitute a KH-like domain.

The protein belongs to the TRAFAC class TrmE-Era-EngA-EngB-Septin-like GTPase superfamily. EngA (Der) GTPase family. Associates with the 50S ribosomal subunit.

Functionally, GTPase that plays an essential role in the late steps of ribosome biogenesis. This is GTPase Der from Leifsonia xyli subsp. xyli (strain CTCB07).